We begin with the raw amino-acid sequence, 200 residues long: ATP-dependent Clp protease proteolytic subunit (200 aa).

Catalysis depends on Ser101, which acts as the Nucleophile. His126 is a catalytic residue.

This sequence belongs to the peptidase S14 family. Component of the chloroplastic Clp protease core complex.

It is found in the plastid. It localises to the chloroplast stroma. It catalyses the reaction Hydrolysis of proteins to small peptides in the presence of ATP and magnesium. alpha-casein is the usual test substrate. In the absence of ATP, only oligopeptides shorter than five residues are hydrolyzed (such as succinyl-Leu-Tyr-|-NHMec, and Leu-Tyr-Leu-|-Tyr-Trp, in which cleavage of the -Tyr-|-Leu- and -Tyr-|-Trp bonds also occurs).. Cleaves peptides in various proteins in a process that requires ATP hydrolysis. Has a chymotrypsin-like activity. Plays a major role in the degradation of misfolded proteins. In Ostreococcus tauri, this protein is ATP-dependent Clp protease proteolytic subunit.